The following is a 171-amino-acid chain: Peptide deformylase (171 aa).

Residues cysteine 91 and histidine 133 each contribute to the Fe cation site. Glutamate 134 is an active-site residue. Residue histidine 137 coordinates Fe cation.

Belongs to the polypeptide deformylase family. It depends on Fe(2+) as a cofactor.

The catalysed reaction is N-terminal N-formyl-L-methionyl-[peptide] + H2O = N-terminal L-methionyl-[peptide] + formate. Functionally, removes the formyl group from the N-terminal Met of newly synthesized proteins. Requires at least a dipeptide for an efficient rate of reaction. N-terminal L-methionine is a prerequisite for activity but the enzyme has broad specificity at other positions. In Edwardsiella ictaluri (strain 93-146), this protein is Peptide deformylase.